The following is a 353-amino-acid chain: Phospho-N-acetylmuramoyl-pentapeptide-transferase (353 aa).

Transmembrane regions (helical) follow at residues 13–33, 66–86, 88–108, 130–150, 162–182, 193–213, 229–249, 256–276, 281–301, and 330–350; these read ILGYITIRAGIAFFLALFFTL, TPTMGGIVFIFATILASLISI, FSNLYAVGAVLTLIFFSIIGF, LILQTTFALIISIFLYTLSDF, PLFDMGIFAIFFWVIVIIATS, GLATVPSITALASFSIIIYIT, IGEVAIVSSALIGALSGFLWY, VFMGDSGSLTIGAFLGYLAII, ILLLLIGSIFVIETLSVILQV, and KIIVRFWIIATLSNVIALITL.

Belongs to the glycosyltransferase 4 family. MraY subfamily. Mg(2+) serves as cofactor.

It is found in the cell inner membrane. The catalysed reaction is UDP-N-acetyl-alpha-D-muramoyl-L-alanyl-gamma-D-glutamyl-meso-2,6-diaminopimeloyl-D-alanyl-D-alanine + di-trans,octa-cis-undecaprenyl phosphate = di-trans,octa-cis-undecaprenyl diphospho-N-acetyl-alpha-D-muramoyl-L-alanyl-D-glutamyl-meso-2,6-diaminopimeloyl-D-alanyl-D-alanine + UMP. It participates in cell wall biogenesis; peptidoglycan biosynthesis. Functionally, catalyzes the initial step of the lipid cycle reactions in the biosynthesis of the cell wall peptidoglycan: transfers peptidoglycan precursor phospho-MurNAc-pentapeptide from UDP-MurNAc-pentapeptide onto the lipid carrier undecaprenyl phosphate, yielding undecaprenyl-pyrophosphoryl-MurNAc-pentapeptide, known as lipid I. The sequence is that of Phospho-N-acetylmuramoyl-pentapeptide-transferase from Sulfurimonas denitrificans (strain ATCC 33889 / DSM 1251) (Thiomicrospira denitrificans (strain ATCC 33889 / DSM 1251)).